We begin with the raw amino-acid sequence, 336 residues long: Pyridoxal 5'-phosphate synthase subunit PdxS (336 aa).

Position 33 (D33) interacts with D-ribose 5-phosphate. Catalysis depends on K90, which acts as the Schiff-base intermediate with D-ribose 5-phosphate. Residue G162 coordinates D-ribose 5-phosphate. D-glyceraldehyde 3-phosphate is bound at residue R174. D-ribose 5-phosphate-binding positions include G260 and 281–282; that span reads GS.

Belongs to the PdxS/SNZ family. In terms of assembly, in the presence of PdxT, forms a dodecamer of heterodimers.

It catalyses the reaction aldehydo-D-ribose 5-phosphate + D-glyceraldehyde 3-phosphate + L-glutamine = pyridoxal 5'-phosphate + L-glutamate + phosphate + 3 H2O + H(+). The protein operates within cofactor biosynthesis; pyridoxal 5'-phosphate biosynthesis. Its function is as follows. Catalyzes the formation of pyridoxal 5'-phosphate from ribose 5-phosphate (RBP), glyceraldehyde 3-phosphate (G3P) and ammonia. The ammonia is provided by the PdxT subunit. Can also use ribulose 5-phosphate and dihydroxyacetone phosphate as substrates, resulting from enzyme-catalyzed isomerization of RBP and G3P, respectively. The sequence is that of Pyridoxal 5'-phosphate synthase subunit PdxS from Picrophilus torridus (strain ATCC 700027 / DSM 9790 / JCM 10055 / NBRC 100828 / KAW 2/3).